Here is a 106-residue protein sequence, read N- to C-terminus: uncharacterized protein (106 aa).

It localises to the mitochondrion. This is an uncharacterized protein from Arabidopsis thaliana (Mouse-ear cress).